Reading from the N-terminus, the 172-residue chain is ATP synthase subunit b (172 aa).

A helical transmembrane segment spans residues 17-37; sequence IVFSAIVLAIVLPFFWWFVIP.

It belongs to the ATPase B chain family. F-type ATPases have 2 components, F(1) - the catalytic core - and F(0) - the membrane proton channel. F(1) has five subunits: alpha(3), beta(3), gamma(1), delta(1), epsilon(1). F(0) has three main subunits: a(1), b(2) and c(10-14). The alpha and beta chains form an alternating ring which encloses part of the gamma chain. F(1) is attached to F(0) by a central stalk formed by the gamma and epsilon chains, while a peripheral stalk is formed by the delta and b chains.

The protein resides in the cell membrane. In terms of biological role, f(1)F(0) ATP synthase produces ATP from ADP in the presence of a proton or sodium gradient. F-type ATPases consist of two structural domains, F(1) containing the extramembraneous catalytic core and F(0) containing the membrane proton channel, linked together by a central stalk and a peripheral stalk. During catalysis, ATP synthesis in the catalytic domain of F(1) is coupled via a rotary mechanism of the central stalk subunits to proton translocation. Component of the F(0) channel, it forms part of the peripheral stalk, linking F(1) to F(0). The polypeptide is ATP synthase subunit b (Tropheryma whipplei (strain TW08/27) (Whipple's bacillus)).